The primary structure comprises 1024 residues: Error-prone DNA polymerase (1024 aa).

Belongs to the DNA polymerase type-C family. DnaE2 subfamily.

It is found in the cytoplasm. The catalysed reaction is DNA(n) + a 2'-deoxyribonucleoside 5'-triphosphate = DNA(n+1) + diphosphate. DNA polymerase involved in damage-induced mutagenesis and translesion synthesis (TLS). It is not the major replicative DNA polymerase. The protein is Error-prone DNA polymerase of Vibrio campbellii (strain ATCC BAA-1116).